Reading from the N-terminus, the 158-residue chain is MIRIGHGFDVHAFGQDRPLMICGVEVPYHTGFIAHSDGDVALHALTDALLGAVALGDIGKLFPDTDMQYKNADSRKLLIEAYRQVRAQGYKVANVDVTIIAQAPKMRPYIDQMRQTIADDLQCDAMQVNVKATTTEKLGFTGRGEGIACEAVALLIKQ.

A divalent metal cation contacts are provided by aspartate 9 and histidine 11. Residues 9–11 (DVH) and 35–36 (HS) each bind 4-CDP-2-C-methyl-D-erythritol 2-phosphate. Position 43 (histidine 43) interacts with a divalent metal cation. 4-CDP-2-C-methyl-D-erythritol 2-phosphate contacts are provided by residues 57–59 (DIG), 62–66 (FPDTD), 133–136 (TTTE), phenylalanine 140, and arginine 143.

It belongs to the IspF family. Homotrimer. A divalent metal cation is required as a cofactor.

It carries out the reaction 4-CDP-2-C-methyl-D-erythritol 2-phosphate = 2-C-methyl-D-erythritol 2,4-cyclic diphosphate + CMP. It participates in isoprenoid biosynthesis; isopentenyl diphosphate biosynthesis via DXP pathway; isopentenyl diphosphate from 1-deoxy-D-xylulose 5-phosphate: step 4/6. In terms of biological role, involved in the biosynthesis of isopentenyl diphosphate (IPP) and dimethylallyl diphosphate (DMAPP), two major building blocks of isoprenoid compounds. Catalyzes the conversion of 4-diphosphocytidyl-2-C-methyl-D-erythritol 2-phosphate (CDP-ME2P) to 2-C-methyl-D-erythritol 2,4-cyclodiphosphate (ME-CPP) with a corresponding release of cytidine 5-monophosphate (CMP). This is 2-C-methyl-D-erythritol 2,4-cyclodiphosphate synthase from Actinobacillus pleuropneumoniae serotype 5b (strain L20).